A 170-amino-acid polypeptide reads, in one-letter code: Peptidyl-prolyl cis-trans isomerase-like 3 (170 aa).

The PPIase cyclophilin-type domain occupies 1 to 160 (MSVTLHTDLG…QEFRIKSVTI (160 aa)).

This sequence belongs to the cyclophilin-type PPIase family. PPIL3 subfamily.

It catalyses the reaction [protein]-peptidylproline (omega=180) = [protein]-peptidylproline (omega=0). Its function is as follows. PPIases accelerate the folding of proteins. It catalyzes the cis-trans isomerization of proline imidic peptide bonds in oligopeptides. The chain is Peptidyl-prolyl cis-trans isomerase-like 3 (cyp4) from Rhizopus delemar (strain RA 99-880 / ATCC MYA-4621 / FGSC 9543 / NRRL 43880) (Mucormycosis agent).